Here is a 517-residue protein sequence, read N- to C-terminus: RNA-binding region-containing protein 3 (517 aa).

The segment at 1-26 (MAAPEQPLAISRGCTSSSSLSPPRGD) is disordered. Position 21 is a phosphoserine (Ser-21). In terms of domain architecture, RRM 1 spans 27–102 (RTLLVRHLPA…HTLVVEFAKE (76 aa)). Disordered regions lie at residues 106-130 (VHSPCPTSGSEKKKRSDDPVEDDKE) and 213-254 (MPLH…DEDR). A Phosphoserine modification is found at Ser-108. Positions 115 to 130 (SEKKKRSDDPVEDDKE) are enriched in basic and acidic residues. The span at 217–230 (APLPPTSPQPPEEP) shows a compositional bias: pro residues. Positions 231 to 252 (PLPEEDEELSSEESEYESTDDE) are enriched in acidic residues. The 84-residue stretch at 420-503 (CRIYVKNLAK…KPMVVQFARS (84 aa)) folds into the RRM 2 domain.

Component of the U11/U12 snRNPs that are part of the U12-type spliceosome. Found in a complex with m(7)G-capped U12 snRNA. Interacts with PDCD7.

The protein resides in the nucleus. In terms of biological role, participates in pre-mRNA U12-dependent splicing, performed by the minor spliceosome which removes U12-type introns. U12-type introns comprises less than 1% of all non-coding sequences. Binds to the 3'-stem-loop of m(7)G-capped U12 snRNA. The sequence is that of RNA-binding region-containing protein 3 (RNPC3) from Pongo abelii (Sumatran orangutan).